Consider the following 200-residue polypeptide: Cysteine dioxygenase type 1 (200 aa).

Fe cation-binding residues include histidine 86, histidine 88, and histidine 140. A cross-link (3'-(S-cysteinyl)-tyrosine (Cys-Tyr)) is located at residues 93-157 (CFLKMLQGNL…TEPAVSLHLY (65 aa)).

This sequence belongs to the cysteine dioxygenase family. Monomer. Fe(2+) serves as cofactor. It depends on Ni(2+) as a cofactor. Requires Zn(2+) as cofactor. Post-translationally, the thioether cross-link between Cys-93 and Tyr-157 plays a structural role through stabilizing the Fe(2+) ion, and prevents the production of highly damaging free hydroxyl radicals by holding the oxygen radical via hydroxyl hydrogen. In terms of tissue distribution, highly expressed in liver and placenta. Low expression in heart, brain and pancreas. Also detected in hepatoblastoma Hep-G2 cells.

The enzyme catalyses L-cysteine + O2 = 3-sulfino-L-alanine + H(+). It functions in the pathway organosulfur biosynthesis; taurine biosynthesis; hypotaurine from L-cysteine: step 1/2. Catalyzes the oxidation of cysteine to cysteine sulfinic acid with addition of molecular dioxygen. This chain is Cysteine dioxygenase type 1 (CDO1), found in Homo sapiens (Human).